The primary structure comprises 299 residues: GTPase Era (299 aa).

One can recognise an Era-type G domain in the interval 9–177 (RSGSVAVIGR…VGDLLKLVPE (169 aa)). The tract at residues 17 to 24 (GRPNVGKS) is G1. 17–24 (GRPNVGKS) serves as a coordination point for GTP. The interval 43 to 47 (QTTRH) is G2. Residues 64-67 (DTPG) form a G3 region. Residues 64–68 (DTPGL) and 126–129 (NKVD) contribute to the GTP site. Positions 126-129 (NKVD) are G4. The interval 156-158 (VSA) is G5. Residues 200-284 (VREQLMRQLG…FLETWVRVRE (85 aa)) enclose the KH type-2 domain.

The protein belongs to the TRAFAC class TrmE-Era-EngA-EngB-Septin-like GTPase superfamily. Era GTPase family. In terms of assembly, monomer.

It localises to the cytoplasm. It is found in the cell inner membrane. Functionally, an essential GTPase that binds both GDP and GTP, with rapid nucleotide exchange. Plays a role in 16S rRNA processing and 30S ribosomal subunit biogenesis and possibly also in cell cycle regulation and energy metabolism. The chain is GTPase Era from Xanthomonas oryzae pv. oryzae (strain MAFF 311018).